The sequence spans 101 residues: Small ribosomal subunit protein eS24 (101 aa).

This sequence belongs to the eukaryotic ribosomal protein eS24 family.

This is Small ribosomal subunit protein eS24 from Methanosarcina barkeri (strain Fusaro / DSM 804).